Consider the following 549-residue polypeptide: Cilia- and flagella-associated protein 45 (549 aa).

The tract at residues 1–29 (MPLSPAGVLSSTSTASNRSRNRPRYRTKA) is disordered. Coiled-coil stretches lie at residues 119–232 (REEL…MMEV), 259–393 (IVEQ…KRNQ), and 434–522 (AVQV…KIEE). Residues 388-416 (RAKRNQEVADREWRRKEKENAQKKMETEA) are disordered.

The protein belongs to the CFAP45 family. In terms of assembly, microtubule inner protein component of sperm flagellar doublet microtubules. Interacts with AK8; dimerization with AK8 may create a cavity at the interface of the dimer that can accommodate AMP. Interacts with CFAP52. Interacts with ENKUR. Directly interacts with DNALI1. Interacts with DNAH11. Interacts with DNAI1. Expressed in respiratory cells (at protein level).

It localises to the cytoplasm. The protein resides in the cytoskeleton. It is found in the cilium axoneme. Its subcellular location is the flagellum axoneme. The protein localises to the cell projection. It localises to the cilium. The protein resides in the flagellum. Its function is as follows. Microtubule inner protein (MIP) part of the dynein-decorated doublet microtubules (DMTs) in cilia axoneme, which is required for motile cilia beating. It is an AMP-binding protein that may facilitate dynein ATPase-dependent ciliary and flagellar beating via adenine nucleotide homeostasis. May function as a donor of AMP to AK8 and hence promote ADP production. The chain is Cilia- and flagella-associated protein 45 (CFAP45) from Sus scrofa (Pig).